Consider the following 424-residue polypeptide: Acetyl-CoA acetyltransferase, mitochondrial (424 aa).

Residues 1 to 30 (MAALVALHGVVRRPLLRGLLQEVRCLERSY) constitute a mitochondrion transit peptide. Lys63 bears the N6-acetyllysine; alternate mark. Lys63 bears the N6-succinyllysine; alternate mark. Position 75 is an N6-succinyllysine (Lys75). The active-site Acyl-thioester intermediate is Cys123. N6-acetyllysine; alternate is present on residues Lys171, Lys178, Lys187, and Lys199. An N6-succinyllysine; alternate mark is found at Lys171, Lys178, Lys187, and Lys199. A Phosphoserine modification is found at Ser204. Tyr216 contributes to the CoA binding site. Tyr216 contacts K(+). N6-acetyllysine; alternate occurs at positions 220 and 227. Lys220 and Lys227 each carry N6-succinyllysine; alternate. The residue at position 240 (Lys240) is an N6-succinyllysine. An N6-acetyllysine; alternate modification is found at Lys242. Lys242 carries the post-translational modification N6-succinyllysine; alternate. An N6-acetyllysine mark is found at Lys248 and Lys254. CoA is bound by residues 255 to 257 (RVD) and Lys260. Residue Lys260 is modified to N6-acetyllysine; alternate. An N6-succinyllysine; alternate modification is found at Lys260. N6-succinyllysine occurs at positions 263 and 265. Residue Lys270 is modified to N6-acetyllysine. The K(+) site is built by Ala277, Ala278, and Ala280. Residue Ser281 participates in CoA binding. Lys335 is subject to N6-acetyllysine. Val378 contacts K(+). Residue Cys410 is the Proton donor/acceptor of the active site.

It belongs to the thiolase-like superfamily. Thiolase family. In terms of assembly, homotetramer. In terms of processing, succinylation at Lys-265, adjacent to a coenzyme A binding site. Desuccinylated by SIRT5.

The protein localises to the mitochondrion. It catalyses the reaction 2 acetyl-CoA = acetoacetyl-CoA + CoA. The catalysed reaction is propanoyl-CoA + acetyl-CoA = 2-methyl-3-oxobutanoyl-CoA + CoA. It functions in the pathway lipid metabolism; fatty acid beta-oxidation. Activated by potassium ions, but not sodium ions. This is one of the enzymes that catalyzes the last step of the mitochondrial beta-oxidation pathway, an aerobic process breaking down fatty acids into acetyl-CoA. Using free coenzyme A/CoA, catalyzes the thiolytic cleavage of medium- to long-chain 3-oxoacyl-CoAs into acetyl-CoA and a fatty acyl-CoA shortened by two carbon atoms. The activity of the enzyme is reversible and it can also catalyze the condensation of two acetyl-CoA molecules into acetoacetyl-CoA. Thereby, it plays a major role in ketone body metabolism. The protein is Acetyl-CoA acetyltransferase, mitochondrial (Acat1) of Mus musculus (Mouse).